Here is a 340-residue protein sequence, read N- to C-terminus: uncharacterized protein (340 aa).

This is an uncharacterized protein from Archaeoglobus fulgidus (strain ATCC 49558 / DSM 4304 / JCM 9628 / NBRC 100126 / VC-16).